Reading from the N-terminus, the 790-residue chain is Phenylalanine--tRNA ligase beta subunit (790 aa).

Positions 39 to 154 (PDSLNTVVTG…ADTPLGESAC (116 aa)) constitute a tRNA-binding domain. The 80-residue stretch at 404-483 (FSPLSLSVRP…FVQKTQKILP (80 aa)) folds into the B5 domain. 4 residues coordinate Mg(2+): D457, D463, E466, and E467. The FDX-ACB domain occupies 694-790 (PIYPASSRDI…KLANIGQGNS (97 aa)).

The protein belongs to the phenylalanyl-tRNA synthetase beta subunit family. Type 1 subfamily. As to quaternary structure, tetramer of two alpha and two beta subunits. Mg(2+) is required as a cofactor.

The protein localises to the cytoplasm. It carries out the reaction tRNA(Phe) + L-phenylalanine + ATP = L-phenylalanyl-tRNA(Phe) + AMP + diphosphate + H(+). The sequence is that of Phenylalanine--tRNA ligase beta subunit (pheT) from Chlamydia trachomatis serovar D (strain ATCC VR-885 / DSM 19411 / UW-3/Cx).